Here is a 357-residue protein sequence, read N- to C-terminus: DNA replication and repair protein RecF (357 aa).

30–37 (GANGSGKT) contributes to the ATP binding site.

The protein belongs to the RecF family.

It is found in the cytoplasm. In terms of biological role, the RecF protein is involved in DNA metabolism; it is required for DNA replication and normal SOS inducibility. RecF binds preferentially to single-stranded, linear DNA. It also seems to bind ATP. In Salmonella paratyphi B (strain ATCC BAA-1250 / SPB7), this protein is DNA replication and repair protein RecF.